Consider the following 323-residue polypeptide: Queuosine 5'-phosphate N-glycosylase/hydrolase (323 aa).

Queuosine 5'-phosphate is bound by residues asparagine 72, tyrosine 93, lysine 199, phenylalanine 229, aspartate 231, aspartate 298, tryptophan 302, and glutamine 306. Aspartate 231 acts as the Nucleophile or transition state stabilizer in catalysis.

Belongs to the QNG1 protein family. Monomer.

It carries out the reaction queuosine 5'-phosphate + H2O = queuine + D-ribose 5-phosphate. Functionally, catalyzes the hydrolysis of queuosine 5'-phosphate, releasing the nucleobase queuine (q). Is likely required for salvage of queuine from exogenous queuosine (Q) that is imported and then converted to queuosine 5'-phosphate intracellularly. In vitro, can also catalyze the release of the q base directly from Q as substrate; however, Q may not be the biologically relevant substrate. Shows a very low activity on queuosine 3',5'-diphosphate, and cannot release q from queuosine 3'-phosphate and from the 5'-nucleotides AMP, UMP, CMP or GMP, indicating specificity for the queuine base. This Sphaerobacter thermophilus (strain ATCC 49802 / DSM 20745 / KCCM 41009 / NCIMB 13125 / S 6022) protein is Queuosine 5'-phosphate N-glycosylase/hydrolase.